An 806-amino-acid polypeptide reads, in one-letter code: GPI ethanolamine phosphate transferase 2 (806 aa).

N-linked (GlcNAc...) asparagine glycans are attached at residues asparagine 70, asparagine 184, and asparagine 242. Transmembrane regions (helical) follow at residues 396-416, 425-445, and 451-471; these read MLFL…YCYI, SVLM…SSFV, and IWWW…PSCT. Asparagine 488 carries an N-linked (GlcNAc...) asparagine glycan. The next 8 helical transmembrane spans lie at 508–528, 532–552, 593–613, 624–644, 664–684, 706–726, 745–765, and 782–804; these read PSIK…DGFT, LLSI…TCWA, LFFK…VVFA, LFTI…FLVF, CEMF…QFGG, IYVV…YWSL, LSSM…CICM, and LLGW…LLMV.

This sequence belongs to the PIGG/PIGN/PIGO family. PIGG subfamily.

The protein resides in the endoplasmic reticulum membrane. It participates in glycolipid biosynthesis; glycosylphosphatidylinositol-anchor biosynthesis. Its function is as follows. Ethanolamine phosphate transferase involved in glycosylphosphatidylinositol-anchor biosynthesis. Transfers ethanolamine phosphate to the GPI second mannose. This Eremothecium gossypii (strain ATCC 10895 / CBS 109.51 / FGSC 9923 / NRRL Y-1056) (Yeast) protein is GPI ethanolamine phosphate transferase 2 (LAS21).